The primary structure comprises 143 residues: NADH-quinone oxidoreductase subunit A (143 aa).

Transmembrane regions (helical) follow at residues 8-28 (FGNV…GYLT), 63-83 (FYVV…LYPW), and 93-113 (FALI…AYAW).

Belongs to the complex I subunit 3 family. As to quaternary structure, NDH-1 is composed of 14 different subunits. Subunits NuoA, H, J, K, L, M, N constitute the membrane sector of the complex.

It is found in the cell inner membrane. The catalysed reaction is a quinone + NADH + 5 H(+)(in) = a quinol + NAD(+) + 4 H(+)(out). Its function is as follows. NDH-1 shuttles electrons from NADH, via FMN and iron-sulfur (Fe-S) centers, to quinones in the respiratory chain. The immediate electron acceptor for the enzyme in this species is believed to be a menaquinone. Couples the redox reaction to proton translocation (for every two electrons transferred, four hydrogen ions are translocated across the cytoplasmic membrane), and thus conserves the redox energy in a proton gradient. This Pelodictyon phaeoclathratiforme (strain DSM 5477 / BU-1) protein is NADH-quinone oxidoreductase subunit A.